The following is an 83-amino-acid chain: Small ribosomal subunit protein uS17 (83 aa).

It belongs to the universal ribosomal protein uS17 family. In terms of assembly, part of the 30S ribosomal subunit.

One of the primary rRNA binding proteins, it binds specifically to the 5'-end of 16S ribosomal RNA. The polypeptide is Small ribosomal subunit protein uS17 (Synechococcus sp. (strain RCC307)).